Here is a 311-residue protein sequence, read N- to C-terminus: tRNA(Ile)-lysidine synthase (311 aa).

32 to 37 is a binding site for ATP; the sequence is SGGPDS.

This sequence belongs to the tRNA(Ile)-lysidine synthase family.

The protein localises to the cytoplasm. The enzyme catalyses cytidine(34) in tRNA(Ile2) + L-lysine + ATP = lysidine(34) in tRNA(Ile2) + AMP + diphosphate + H(+). Ligates lysine onto the cytidine present at position 34 of the AUA codon-specific tRNA(Ile) that contains the anticodon CAU, in an ATP-dependent manner. Cytidine is converted to lysidine, thus changing the amino acid specificity of the tRNA from methionine to isoleucine. This Cutibacterium acnes (strain DSM 16379 / KPA171202) (Propionibacterium acnes) protein is tRNA(Ile)-lysidine synthase.